The following is a 74-amino-acid chain: Conotoxin Vc6.8 (74 aa).

A signal peptide spans 1-19 (MEKLTILLLVAAVLMSTQA). Positions 20–34 (LMQEQRQKAKINLFS) are excised as a propeptide. 3 cysteine pairs are disulfide-bonded: Cys-49–Cys-62, Cys-55–Cys-66, and Cys-61–Cys-70.

This sequence belongs to the conotoxin O2 superfamily. In terms of tissue distribution, expressed by the venom duct.

The protein resides in the secreted. Its function is as follows. Inhibits voltage-gated ion channels. The protein is Conotoxin Vc6.8 of Conus victoriae (Queen Victoria cone).